We begin with the raw amino-acid sequence, 108 residues long: RNA silencing suppressor (108 aa).

The basic stretch occupies residues 47–50; the sequence is RRRR. The C4-type zinc-finger motif lies at 57-78; sequence CHRCYRLWPPTVFTTRCDNKYC.

The protein belongs to the carlaviruses nucleic acid-binding protein family.

In terms of biological role, suppressor of viral-induced RNA silencing. The potential mechanism of action is based on sequestering siRNAs. The polypeptide is RNA silencing suppressor (Solanum tuberosum (Potato)).